Reading from the N-terminus, the 449-residue chain is MYHIWIKFLAAWIFLKKFNGVHVMQAKAPMYRNEPFLVFWNAPTTQCRLRYKVDLDLKTFHIVSNANDSLSGSAVTIFYPNHLGVYPHIDDRGHFFHGIIPQNESLTKHLNKSKSDINRIIPLKAFHGLGVIDWENWRPQWDRNWGSKNVYRNRSIQFARDLHPELSEDKIRRLAKKEYEKAAKSFMRDTLLLAEEMRPDGYWGYYLYSDCQNYDYKTKGDQYTGKCPEIEMSRNDQLLWLWRDSTALFPNVYLEIILRSSDNALKFVHHRLKEAMRIASMAREDYALPVFAYARPFYAYTFEPLTQEDLVTTVGETAAMGAAGIVFWGSMQYASTVDSCQKVKKYMNGPLGRYIVNVTTAAKICSRVLCRKNGRCVRKHSDSNAFLHLFPESFRIMVYANATEKKVIVKGKLELENLIYLRENFMCQCYQGWKGLYCEEYSIKDIRKI.

The first 23 residues, 1 to 23, serve as a signal peptide directing secretion; the sequence is MYHIWIKFLAAWIFLKKFNGVHV. Cystine bridges form between Cys47/Cys340 and Cys211/Cys227. N-linked (GlcNAc...) asparagine glycosylation is found at Asn67, Asn103, and Asn111. Residue Glu135 is the Proton donor of the active site. A glycan (N-linked (GlcNAc...) asparagine) is linked at Asn153. An N-linked (GlcNAc...) asparagine glycan is attached at Asn357. Cystine bridges form between Cys365–Cys376, Cys370–Cys427, and Cys429–Cys438. N-linked (GlcNAc...) asparagine glycosylation occurs at Asn401. In terms of domain architecture, EGF-like spans 427-438; it reads CQCYQGWKGLYC.

Belongs to the glycosyl hydrolase 56 family. Monomer. Expressed by the venom gland.

It is found in the secreted. The enzyme catalyses Random hydrolysis of (1-&gt;4)-linkages between N-acetyl-beta-D-glucosamine and D-glucuronate residues in hyaluronate.. Functionally, snake venom endo-hyaluronidase that degrades hyaluronan to smaller oligosaccharide fragments. In venom, it is not toxic by itself, but increases the diffusion of other venom proteins by degrading the extracellular matrix. In addition, it displays antiedematogenic activity. The chain is Hyaluronidase-3 from Cerastes cerastes (Horned desert viper).